A 190-amino-acid polypeptide reads, in one-letter code: Peptidyl-tRNA hydrolase (190 aa).

Y19 is a binding site for tRNA. H24 functions as the Proton acceptor in the catalytic mechanism. 3 residues coordinate tRNA: Y72, N74, and N121.

The protein belongs to the PTH family.

It localises to the mitochondrion. It carries out the reaction an N-acyl-L-alpha-aminoacyl-tRNA + H2O = an N-acyl-L-amino acid + a tRNA + H(+). Its function is as follows. Peptidyl-tRNA hydrolase involved in the recycling of tRNA-Lys from diacetyl-lysyl-tRNA-Lys and is important for mitochondrial function. This is Peptidyl-tRNA hydrolase (PTH1) from Saccharomyces cerevisiae (strain ATCC 204508 / S288c) (Baker's yeast).